Here is a 553-residue protein sequence, read N- to C-terminus: CTP synthase (553 aa).

The interval 1–275 is amidoligase domain; the sequence is MPTETEYDPS…DQYVMEQFDM (275 aa). Residue Ser24 participates in CTP binding. Ser24 serves as a coordination point for UTP. ATP is bound at residue 25 to 30; the sequence is GLGKGI. Tyr65 is an L-glutamine binding site. Asp82 is a binding site for ATP. Mg(2+) is bound by residues Asp82 and Glu150. CTP is bound by residues 157–159, 196–201, and Lys232; these read DIE and KTKPTQ. UTP-binding positions include 196–201 and Lys232; that span reads KTKPTQ. One can recognise a Glutamine amidotransferase type-1 domain in the interval 308-540; the sequence is KYALEDAYMS…LDAVLERADV (233 aa). Gly362 is an L-glutamine binding site. The active-site Nucleophile; for glutamine hydrolysis is Cys389. L-glutamine is bound by residues 390–393, Glu413, and Arg470; that span reads LGFQ. Active-site residues include His513 and Glu515.

It belongs to the CTP synthase family. As to quaternary structure, homotetramer.

It catalyses the reaction UTP + L-glutamine + ATP + H2O = CTP + L-glutamate + ADP + phosphate + 2 H(+). The enzyme catalyses L-glutamine + H2O = L-glutamate + NH4(+). It carries out the reaction UTP + NH4(+) + ATP = CTP + ADP + phosphate + 2 H(+). It participates in pyrimidine metabolism; CTP biosynthesis via de novo pathway; CTP from UDP: step 2/2. Its activity is regulated as follows. Allosterically activated by GTP, when glutamine is the substrate; GTP has no effect on the reaction when ammonia is the substrate. The allosteric effector GTP functions by stabilizing the protein conformation that binds the tetrahedral intermediate(s) formed during glutamine hydrolysis. Inhibited by the product CTP, via allosteric rather than competitive inhibition. Functionally, catalyzes the ATP-dependent amination of UTP to CTP with either L-glutamine or ammonia as the source of nitrogen. Regulates intracellular CTP levels through interactions with the four ribonucleotide triphosphates. This chain is CTP synthase, found in Halobacterium salinarum (strain ATCC 29341 / DSM 671 / R1).